The primary structure comprises 129 residues: Glycine cleavage system H protein (129 aa).

In terms of domain architecture, Lipoyl-binding spans 24-106 (LLKIGVSEFA…IGEGWLVILK (83 aa)). Residue Lys-65 is modified to N6-lipoyllysine.

This sequence belongs to the GcvH family. The glycine cleavage system is composed of four proteins: P, T, L and H. The cofactor is (R)-lipoate.

In terms of biological role, the glycine cleavage system catalyzes the degradation of glycine. The H protein shuttles the methylamine group of glycine from the P protein to the T protein. The polypeptide is Glycine cleavage system H protein (Prochlorococcus marinus (strain MIT 9312)).